A 739-amino-acid polypeptide reads, in one-letter code: Probable beta-glucosidase L (739 aa).

A signal peptide spans 1 to 17 (MQNLFLSLLAAAVTVHA). A glycan (N-linked (GlcNAc...) asparagine) is linked at asparagine 224. Residue aspartate 252 is part of the active site. N-linked (GlcNAc...) asparagine glycosylation is present at asparagine 398.

The protein belongs to the glycosyl hydrolase 3 family.

Its subcellular location is the secreted. The catalysed reaction is Hydrolysis of terminal, non-reducing beta-D-glucosyl residues with release of beta-D-glucose.. Its pathway is glycan metabolism; cellulose degradation. Its function is as follows. Beta-glucosidases are one of a number of cellulolytic enzymes involved in the degradation of cellulosic biomass. Catalyzes the last step releasing glucose from the inhibitory cellobiose. The sequence is that of Probable beta-glucosidase L (bglL) from Neosartorya fischeri (strain ATCC 1020 / DSM 3700 / CBS 544.65 / FGSC A1164 / JCM 1740 / NRRL 181 / WB 181) (Aspergillus fischerianus).